The sequence spans 422 residues: Beclin-1-like protein (422 aa).

Residues 119-243 are a coiled coil; that stretch reads MLEIMDRELR…KQQLDKLRDT (125 aa). Residues 182 to 201 are disordered; that stretch reads QSLNDAIAEEEQEREELHEQ.

Belongs to the beclin family. As to quaternary structure, interacts with Rab18, preferentially binding to the GTP-bound form.

Its function is as follows. Plays a central role in autophagy. The protein is Beclin-1-like protein of Drosophila melanogaster (Fruit fly).